The chain runs to 143 residues: S-adenosylmethionine decarboxylase proenzyme (143 aa).

The active-site Schiff-base intermediate with substrate; via pyruvic acid is serine 66. Serine 66 carries the post-translational modification Pyruvic acid (Ser); by autocatalysis. The active-site Proton acceptor; for processing activity is histidine 71. The Proton donor; for catalytic activity role is filled by cysteine 86.

The protein belongs to the prokaryotic AdoMetDC family. Type 1 subfamily. As to quaternary structure, heterotetramer of two alpha and two beta chains arranged as a dimer of alpha/beta heterodimers. Pyruvate is required as a cofactor. Is synthesized initially as an inactive proenzyme. Formation of the active enzyme involves a self-maturation process in which the active site pyruvoyl group is generated from an internal serine residue via an autocatalytic post-translational modification. Two non-identical subunits are generated from the proenzyme in this reaction, and the pyruvate is formed at the N-terminus of the alpha chain, which is derived from the carboxyl end of the proenzyme. The post-translation cleavage follows an unusual pathway, termed non-hydrolytic serinolysis, in which the side chain hydroxyl group of the serine supplies its oxygen atom to form the C-terminus of the beta chain, while the remainder of the serine residue undergoes an oxidative deamination to produce ammonia and the pyruvoyl group blocking the N-terminus of the alpha chain.

The catalysed reaction is S-adenosyl-L-methionine + H(+) = S-adenosyl 3-(methylsulfanyl)propylamine + CO2. The protein operates within amine and polyamine biosynthesis; S-adenosylmethioninamine biosynthesis; S-adenosylmethioninamine from S-adenosyl-L-methionine: step 1/1. Functionally, catalyzes the decarboxylation of S-adenosylmethionine to S-adenosylmethioninamine (dcAdoMet), the propylamine donor required for the synthesis of the polyamines spermine and spermidine from the diamine putrescine. The chain is S-adenosylmethionine decarboxylase proenzyme from Thermococcus kodakarensis (strain ATCC BAA-918 / JCM 12380 / KOD1) (Pyrococcus kodakaraensis (strain KOD1)).